Here is a 1383-residue protein sequence, read N- to C-terminus: DNA-directed RNA polymerase subunit beta (1383 aa).

Belongs to the RNA polymerase beta chain family. The RNAP catalytic core consists of 2 alpha, 1 beta, 1 beta' and 1 omega subunit. When a sigma factor is associated with the core the holoenzyme is formed, which can initiate transcription.

It catalyses the reaction RNA(n) + a ribonucleoside 5'-triphosphate = RNA(n+1) + diphosphate. Its function is as follows. DNA-dependent RNA polymerase catalyzes the transcription of DNA into RNA using the four ribonucleoside triphosphates as substrates. In Xanthomonas oryzae pv. oryzae (strain MAFF 311018), this protein is DNA-directed RNA polymerase subunit beta.